The following is a 466-amino-acid chain: Chromosomal replication initiator protein DnaA (466 aa).

The tract at residues 1 to 85 is domain I, interacts with DnaA modulators; the sequence is MSLSLWQHCL…FEVGNKPVSA (85 aa). Residues 82–122 form a disordered region; sequence PVSARTTESVPKTVTHPAVNSTPTNSQPVRPSWDNQPQSQL. The segment covering 85-122 has biased composition (polar residues); it reads ARTTESVPKTVTHPAVNSTPTNSQPVRPSWDNQPQSQL. Positions 85-129 are domain II; that stretch reads ARTTESVPKTVTHPAVNSTPTNSQPVRPSWDNQPQSQLPELNYRS. The domain III, AAA+ region stretch occupies residues 130–346; the sequence is NVNPKHKFDN…GALNRVIANA (217 aa). ATP-binding residues include Gly-174, Gly-176, Lys-177, and Thr-178. A domain IV, binds dsDNA region spans residues 347 to 466; sequence NFTGRAITID…FSNLIRTLSS (120 aa).

Belongs to the DnaA family. Oligomerizes as a right-handed, spiral filament on DNA at oriC.

Its subcellular location is the cytoplasm. Plays an essential role in the initiation and regulation of chromosomal replication. ATP-DnaA binds to the origin of replication (oriC) to initiate formation of the DNA replication initiation complex once per cell cycle. Binds the DnaA box (a 9 base pair repeat at the origin) and separates the double-stranded (ds)DNA. Forms a right-handed helical filament on oriC DNA; dsDNA binds to the exterior of the filament while single-stranded (ss)DNA is stabiized in the filament's interior. The ATP-DnaA-oriC complex binds and stabilizes one strand of the AT-rich DNA unwinding element (DUE), permitting loading of DNA polymerase. After initiation quickly degrades to an ADP-DnaA complex that is not apt for DNA replication. Binds acidic phospholipids. In Proteus mirabilis (strain HI4320), this protein is Chromosomal replication initiator protein DnaA.